We begin with the raw amino-acid sequence, 367 residues long: Endopolygalacturonase B (367 aa).

The signal sequence occupies residues 1–17 (MHFQLLGLAALGSLAAA). Residues 18-30 (APAPSRTSELVER) constitute a propeptide that is removed on maturation. Cysteine 34 and cysteine 49 form a disulfide bridge. 5 PbH1 repeats span residues 161–191 (GNDVHLTDITIDNSDGDNNGGHNTDAFDVSE), 192–213 (SNGVYITGANVKNQDDCLAINS), 214–234 (GENIEFTGATCSGGHGISIGS), 243–264 (VKNVKVADSTVVDSDNGIRIKT), and 272–294 (VSGVTYENITLKNIKKNGIVIEQ). The active-site Proton donor is aspartate 206. Cysteines 208 and 224 form a disulfide. The active site involves histidine 228. Asparagine 279 carries an N-linked (GlcNAc...) asparagine glycan. Cystine bridges form between cysteine 334-cysteine 339 and cysteine 358-cysteine 367.

The protein belongs to the glycosyl hydrolase 28 family.

It is found in the secreted. The enzyme catalyses (1,4-alpha-D-galacturonosyl)n+m + H2O = (1,4-alpha-D-galacturonosyl)n + (1,4-alpha-D-galacturonosyl)m.. Involved in maceration and soft-rotting of plant tissue. Hydrolyzes the 1,4-alpha glycosidic bonds of de-esterified pectate in the smooth region of the plant cell wall. This is Endopolygalacturonase B (pgaB) from Aspergillus flavus (strain ATCC MYA-384 / AF70).